The chain runs to 1370 residues: DNA-directed RNA polymerase subunit beta (1370 aa).

The protein belongs to the RNA polymerase beta chain family. As to quaternary structure, the RNAP catalytic core consists of 2 alpha, 1 beta, 1 beta' and 1 omega subunit. When a sigma factor is associated with the core the holoenzyme is formed, which can initiate transcription.

It carries out the reaction RNA(n) + a ribonucleoside 5'-triphosphate = RNA(n+1) + diphosphate. In terms of biological role, DNA-dependent RNA polymerase catalyzes the transcription of DNA into RNA using the four ribonucleoside triphosphates as substrates. The protein is DNA-directed RNA polymerase subunit beta of Polaromonas naphthalenivorans (strain CJ2).